A 247-amino-acid polypeptide reads, in one-letter code: 5'-nucleotidase SurE (247 aa).

The a divalent metal cation site is built by Asp-8, Asp-9, Ser-39, and Asn-91.

This sequence belongs to the SurE nucleotidase family. The cofactor is a divalent metal cation.

It localises to the cytoplasm. It catalyses the reaction a ribonucleoside 5'-phosphate + H2O = a ribonucleoside + phosphate. Functionally, nucleotidase that shows phosphatase activity on nucleoside 5'-monophosphates. The protein is 5'-nucleotidase SurE of Nitrosomonas europaea (strain ATCC 19718 / CIP 103999 / KCTC 2705 / NBRC 14298).